The sequence spans 115 residues: NTF2-related export protein 1 (115 aa).

Residues 7–115 form the NTF2 domain; that stretch reads YAQEFVQRYY…LVLRSSTNFL (109 aa).

It localises to the nucleus. In terms of biological role, stimulator of protein export for NES-containing proteins. Also plays a role in mRNA nuclear export. This Schizosaccharomyces pombe (strain 972 / ATCC 24843) (Fission yeast) protein is NTF2-related export protein 1 (nxt1).